The following is a 248-amino-acid chain: uncharacterized protein (248 aa).

Residues 33–57 (EWQLSEGQKRCEEINRQNRQLRVEK) adopt a coiled-coil conformation.

This is an uncharacterized protein from Escherichia coli (strain K12).